An 827-amino-acid polypeptide reads, in one-letter code: Discs large homolog 1-like protein (827 aa).

Disordered stretches follow at residues 38–61 and 102–133; these read HQDE…TPGP and SPVV…ANPP. The span at 44-56 shows a compositional bias: polar residues; the sequence is GSPQEPSSPQFTD. PDZ domains follow at residues 159 to 246, 254 to 341, and 403 to 484; these read EITL…RRRK, EIKL…AKPN, and KVVL…QYRP. Positions 518–588 constitute an SH3 domain; the sequence is KRSLYVRALF…PSKRRVEKKE (71 aa). The tract at residues 595-618 is disordered; it reads VKFNSKSREKGDNPDDMLSKGQSG. A Guanylate kinase-like domain is found at 637–812; it reads SRPVIILGPM…IYDQVKQIIE (176 aa).

It belongs to the MAGUK family.

It localises to the membrane. Its function is as follows. May play a role in synapse assembly and function. The polypeptide is Discs large homolog 1-like protein (dlg1l) (Danio rerio (Zebrafish)).